The following is a 702-amino-acid chain: DnaJ homolog subfamily C member 14 (702 aa).

2 disordered regions span residues 1-148 and 165-229; these read MAQK…GGNG and DELE…KRSQ. The span at 75-84 shows a compositional bias: pro residues; sequence HGPPGGPGPP. The span at 88 to 103 shows a compositional bias: acidic residues; it reads EDPDQSETSSEEESGV. A compositionally biased stretch (polar residues) spans 113 to 133; it reads TGNQKDGNSFLSIPSACNCQG. The span at 165–175 shows a compositional bias: acidic residues; sequence DELEEEYDDEE. The segment covering 192 to 201 has biased composition (basic residues); it reads PPSRRQRHRF. Residues 202 to 217 are compositionally biased toward basic and acidic residues; sequence PTKEDTREGGRRDPRS. Residues 218–227 are compositionally biased toward basic residues; the sequence is PGRHRLGRKR. Transmembrane regions (helical) follow at residues 250–270, 300–320, and 326–346; these read AGFWWLIELLVLVGEYVETCG, GWAQVMFQFLSQGFYCGVGLF, and LLGALLLLALALFLGFLQLGW. The J domain occupies 443–507; the sequence is NPFHVLGVEA…EKRKEYEMKR (65 aa). Residues 658–702 are disordered; sequence MPNGNFFAAPQPAPGAAAASKPNSTVPKGEAKPKRRKKVRRPFQR. Positions 659-676 are enriched in low complexity; sequence PNGNFFAAPQPAPGAAAA. Basic residues predominate over residues 690–702; that stretch reads PKRRKKVRRPFQR.

In terms of assembly, interacts with the FxxxFxxxF motif of DRD1 via its C-terminal domain. Highly expressed in pancreas and selectively expressed in brain, lung, liver, skeletal muscle and kidney.

Its subcellular location is the endoplasmic reticulum membrane. Functionally, regulates the export of target proteins, such as DRD1, from the endoplasmic reticulum to the cell surface. The chain is DnaJ homolog subfamily C member 14 (DNAJC14) from Homo sapiens (Human).